The chain runs to 275 residues: AA9 family lytic polysaccharide monooxygenase D (275 aa).

The signal sequence occupies residues 1–17 (MKLSLLAIAAIAPFVSA). His-18 and His-101 together coordinate Cu(2+). The cysteines at positions 67 and 189 are disulfide-linked. His-176 contacts O2. Position 186 (Tyr-186) interacts with Cu(2+). Asn-220 carries an N-linked (GlcNAc...) asparagine glycan.

The protein belongs to the polysaccharide monooxygenase AA9 family. Cu(2+) is required as a cofactor.

Its subcellular location is the secreted. It catalyses the reaction [(1-&gt;4)-beta-D-glucosyl]n+m + reduced acceptor + O2 = 4-dehydro-beta-D-glucosyl-[(1-&gt;4)-beta-D-glucosyl]n-1 + [(1-&gt;4)-beta-D-glucosyl]m + acceptor + H2O.. Its function is as follows. Lytic polysaccharide monooxygenase (LPMO) that depolymerizes crystalline and amorphous polysaccharides via the oxidation of scissile alpha- or beta-(1-4)-glycosidic bonds, yielding C1 or C4 oxidation products. Catalysis by LPMOs requires the reduction of the active-site copper from Cu(II) to Cu(I) by a reducing agent and H(2)O(2) or O(2) as a cosubstrate. In Aspergillus tamarii, this protein is AA9 family lytic polysaccharide monooxygenase D.